The chain runs to 570 residues: Adenine deaminase (570 aa).

It belongs to the metallo-dependent hydrolases superfamily. Adenine deaminase family. Mn(2+) is required as a cofactor.

The enzyme catalyses adenine + H2O + H(+) = hypoxanthine + NH4(+). The sequence is that of Adenine deaminase from Oleidesulfovibrio alaskensis (strain ATCC BAA-1058 / DSM 17464 / G20) (Desulfovibrio alaskensis).